The chain runs to 818 residues: H(+)/Cl(-) exchange transporter 3 (818 aa).

Over 1 to 125 (MESEQLFHRG…WEMTKSLYDA (125 aa)) the chain is Cytoplasmic. Residues 13 to 17 (RNSYN) carry the Di-leucine internalization motif; mediates targeting to late endosome and lysosome membranes motif. Residues 18-19 (SI) carry the IP motif; mediates targeting to recycling endosomes motif. 3 short sequence motifs (di-leucine internalization motif; mediates targeting to late endosome and lysosome membranes) span residues 28 to 29 (LL), 46 to 47 (LL), and 71 to 75 (LLDLL). Residues 126 to 163 (WSGWLVVTLTGLASGALAGLIDIAADWMTDLKEGICLS) form a helical membrane-spanning segment. Asn177 is a glycosylation site (N-linked (GlcNAc...) asparagine). The chain crosses the membrane as a helical span at residues 209 to 232 (MNYIMYIFWALSFAFLAVSLVKVF). Positions 238-242 (GSGIP) match the Selectivity filter part_1 motif. Ser239 provides a ligand contact to chloride. Positions 241 to 248 (IPEIKTIL) form an intramembrane region, helical. Helical transmembrane passes span 258–276 (GKWTLMIKTITLVLAVASG) and 282–301 (EGPLVHVACCCGNIFSYLFP). Residues 280-284 (GKEGP) carry the Selectivity filter part_2 motif. 2 intramembrane regions (helical) span residues 313 to 325 (VLSAASAAGVSVA) and 329 to 337 (PIGGVLFSL). 3 helical membrane passes run 349–367 (LWRSFFAALVAAFVLRSIN), 391–416 (FPFILLGVFGGLWGAFFIRANIAWCR), and 423–443 (FGKYPVLEVIIVAAITAVIAF). N-linked (GlcNAc...) asparagine glycosylation is found at Asn451 and Asn479. 2 helical membrane-spanning segments follow: residues 500 to 520 (IWQLCLALIFKIIMTVFTFGI) and 525 to 544 (GLFIPSMAIGAIAGRIVGIA). Positions 525–529 (GLFIP) match the Selectivity filter part_3 motif. Residue Phe527 coordinates chloride. 2 consecutive intramembrane regions (helical) follow at residues 572 to 586 (GLYAMVGAAACLGGV) and 590 to 601 (TVSLVVIVFELT). The segment at residues 602–605 (GGLE) is an intramembrane region (note=Loop between two helices). A helical membrane pass occupies residues 606 to 624 (YIVPLMAAVMTSKWVGDAF). The Cytoplasmic portion of the chain corresponds to 625–818 (GREGIYEAHI…NQDPASIMFN (194 aa)). Position 630 (Tyr630) interacts with chloride. CBS domains lie at 658 to 722 (MRPR…ARKK) and 755 to 812 (LDMS…NQDP). Residues 689–691 (YNG) and 796–799 (TKKD) contribute to the ATP site.

It belongs to the chloride channel (TC 2.A.49) family. ClC-3/CLCN3 subfamily. In terms of assembly, monomer and homodimer. Forms heterodimers with CLCN4. Post-translationally, N-glycosylated. In terms of tissue distribution, detected in kidney, in the apical part of proximal tubule cells (at protein level). Expressed at high levels in the kidney while a low level expression is seen in the brain. Within the brain, it is prominent in the hippocampus, cerebral cortex and olfactory bulb. As to expression, brain, pancreas, kidney, liver, lung, retina, olfactory bulb, and spinal cord. Pancreas, kidney, liver, lung and retina. In terms of tissue distribution, brain, heart, pancreas, kidney, liver, lung, retina, olfactory bulb, and spinal cord. As to expression, expressed at high levels in the liver and at low levels in the brain.

The protein resides in the cytoplasmic vesicle. The protein localises to the secretory vesicle membrane. Its subcellular location is the lysosome membrane. It localises to the late endosome membrane. It is found in the cell membrane. The protein resides in the early endosome membrane. The protein localises to the recycling endosome membrane. With respect to regulation, inhibited by Cd(2+). May influence large dense-core vesicle exocytosis in adrenal chromaffin cells. Its function is as follows. Strongly outwardly rectifying, electrogenic H(+)/Cl(-)exchanger which mediates the exchange of chloride ions against protons. The CLC channel family contains both chloride channels and proton-coupled anion transporters that exchange chloride or another anion for protons. The presence of conserved gating glutamate residues is typical for family members that function as antiporters. Functionally, strongly outwardly rectifying, electrogenic H(+)/Cl(-)exchanger which mediates the exchange of chloride ions against protons. Facilitates endosomal acidification and chloride accumulation in hepatocytes. In terms of biological role, strongly outwardly rectifying, electrogenic H(+)/Cl(-)exchanger which mediates the exchange of chloride ions against protons. In Mus musculus (Mouse), this protein is H(+)/Cl(-) exchange transporter 3 (Clcn3).